Here is a 756-residue protein sequence, read N- to C-terminus: Virulence factor MDV010 (756 aa).

An N-terminal signal peptide occupies residues 1–30; sequence MPSKSIADHHAGYGVALAIVALLLIHGTAL. The tract at residues 96-120 is disordered; that stretch reads EEHITLSSPRTSTKTTNENGHEKDS. The segment covering 100–113 has biased composition (polar residues); that stretch reads TLSSPRTSTKTTNE. N-linked (GlcNAc...) asparagine; by host glycosylation is found at Asn-222, Asn-241, Asn-287, Asn-423, Asn-495, Asn-542, Asn-552, Asn-580, Asn-660, Asn-684, Asn-715, and Asn-744.

It localises to the secreted. In terms of biological role, may play a role in host immune modulation since the protein is secreted and provides an advantage for growth in vivo while it is completely dispensable in cell culture. The polypeptide is Virulence factor MDV010 (MDV010) (Gallid herpesvirus 2 (strain Chicken/Md5/ATCC VR-987) (GaHV-2)).